We begin with the raw amino-acid sequence, 152 residues long: Lipoprotein signal peptidase (152 aa).

The next 3 helical transmembrane spans lie at 5-25 (LFVLSLILLVALDQLSKFWIV), 61-81 (WFFVVITVLVIGYAIYYLATH), and 84-104 (LNIWKQLALLLIISGGIGNFI). Catalysis depends on residues aspartate 114 and aspartate 130. The chain crosses the membrane as a helical span at residues 125 to 145 (IFNVADSYLTVGVILLLICLW).

It belongs to the peptidase A8 family.

The protein localises to the cell membrane. It catalyses the reaction Release of signal peptides from bacterial membrane prolipoproteins. Hydrolyzes -Xaa-Yaa-Zaa-|-(S,diacylglyceryl)Cys-, in which Xaa is hydrophobic (preferably Leu), and Yaa (Ala or Ser) and Zaa (Gly or Ala) have small, neutral side chains.. It participates in protein modification; lipoprotein biosynthesis (signal peptide cleavage). Functionally, this protein specifically catalyzes the removal of signal peptides from prolipoproteins. This Streptococcus pyogenes serotype M1 protein is Lipoprotein signal peptidase.